We begin with the raw amino-acid sequence, 504 residues long: D-alanine--D-alanyl carrier protein ligase (504 aa).

152–153 (TS) serves as a coordination point for ATP. Asp197 is a binding site for D-alanine. 292–297 (NTYGPT) contributes to the ATP binding site. Val301 provides a ligand contact to D-alanine. Residues Asp383, 394–397 (YNGR), and Lys492 contribute to the ATP site. Lys492 contributes to the D-alanine binding site.

The protein belongs to the ATP-dependent AMP-binding enzyme family. DltA subfamily.

It localises to the cytoplasm. It catalyses the reaction holo-[D-alanyl-carrier protein] + D-alanine + ATP = D-alanyl-[D-alanyl-carrier protein] + AMP + diphosphate. It functions in the pathway cell wall biogenesis; lipoteichoic acid biosynthesis. In terms of biological role, catalyzes the first step in the D-alanylation of lipoteichoic acid (LTA), the activation of D-alanine and its transfer onto the D-alanyl carrier protein (Dcp) DltC. In an ATP-dependent two-step reaction, forms a high energy D-alanyl-AMP intermediate, followed by transfer of the D-alanyl residue as a thiol ester to the phosphopantheinyl prosthetic group of the Dcp. D-alanylation of LTA plays an important role in modulating the properties of the cell wall in Gram-positive bacteria, influencing the net charge of the cell wall. The polypeptide is D-alanine--D-alanyl carrier protein ligase (Bacillus cereus (strain B4264)).